The chain runs to 341 residues: MNNYLRKLVEGQHLTEEEMYKAGLLLLNENILESEIAAFLVLLKAKGETAEEIYGLVRALREKALPFSNHIQGAMDNCGTGGDGAQTFNISTTSAFVLAGADVKVAKHGNRAVSSKTGSADLLEELGVNISSTPNEIDYLLEHVGIAFLFAPVMHPALKRIMKIRKELNVPTIFNLIGPLTNPVNLETQFVGIYKRDMLLPVAQVLQKLGRKQALVVNGSGFLDEASLQGENHVVILKDNEIVETSIEPKKYGFSIVKNEEIRGGNSKENAKITLGVLSGEKSVYRDTVLFNAGLALFANGKAKTIEEGITLAAHSIDSGKALAKLNLLIAASNEKLERVN.

5-phospho-alpha-D-ribose 1-diphosphate is bound by residues Gly-79, 82–83 (GD), Thr-87, 89–92 (NIST), 107–115 (KHGNRAVSS), and Ser-119. Anthranilate is bound at residue Gly-79. Ser-91 is a Mg(2+) binding site. Asn-110 lines the anthranilate pocket. Arg-165 is an anthranilate binding site. Positions 224 and 225 each coordinate Mg(2+).

The protein belongs to the anthranilate phosphoribosyltransferase family. In terms of assembly, homodimer. It depends on Mg(2+) as a cofactor.

It catalyses the reaction N-(5-phospho-beta-D-ribosyl)anthranilate + diphosphate = 5-phospho-alpha-D-ribose 1-diphosphate + anthranilate. It participates in amino-acid biosynthesis; L-tryptophan biosynthesis; L-tryptophan from chorismate: step 2/5. Catalyzes the transfer of the phosphoribosyl group of 5-phosphorylribose-1-pyrophosphate (PRPP) to anthranilate to yield N-(5'-phosphoribosyl)-anthranilate (PRA). The polypeptide is Anthranilate phosphoribosyltransferase (Bacillus cereus (strain ZK / E33L)).